A 418-amino-acid chain; its full sequence is Cyclin-dependent kinase 15 (418 aa).

The 286-residue stretch at Tyr84–Phe369 folds into the Protein kinase domain. Residues Leu90 to Val98 and Lys113 contribute to the ATP site. The Proton acceptor role is filled by Asp205.

It belongs to the protein kinase superfamily. CMGC Ser/Thr protein kinase family. CDC2/CDKX subfamily. It depends on Mg(2+) as a cofactor.

It catalyses the reaction L-seryl-[protein] + ATP = O-phospho-L-seryl-[protein] + ADP + H(+). It carries out the reaction L-threonyl-[protein] + ATP = O-phospho-L-threonyl-[protein] + ADP + H(+). Serine/threonine-protein kinase involved in the control of the eukaryotic cell cycle, whose activity is controlled by an associated cyclin. This chain is Cyclin-dependent kinase 15 (cdk15), found in Danio rerio (Zebrafish).